The chain runs to 267 residues: Nus factor SuhB (267 aa).

E67, D84, and L86 together coordinate Mg(2+). E67 is a substrate binding site. Residues 86 to 89, R183, and D212 each bind substrate; that span reads LDGT.

This sequence belongs to the inositol monophosphatase superfamily. As to quaternary structure, homodimer. The rRNA transcription and antitermination complex (rrnTAC) consists of RNA polymerase (RNAP), NusA, NusB, NusE (rpsJ), NusG, SubB, ribosomal protein S4, DNA and precursor rRNA; S4 is more flexible than other subunits. The cofactor is Mg(2+).

It is found in the cytoplasm. It carries out the reaction a myo-inositol phosphate + H2O = myo-inositol + phosphate. Functionally, part of the processive rRNA transcription and antitermination complex (rrnTAC). The complex forms an RNA-chaperone ring around the RNA exit tunnel of RNA polymerase (RNAP). It supports rapid transcription and antitermination of rRNA operons, cotranscriptional rRNA folding, and annealing of distal rRNA regions to allow correct ribosome biogenesis. This subunit may play a central role in organizing the structure. This is Nus factor SuhB from Vibrio cholerae serotype O1 (strain ATCC 39315 / El Tor Inaba N16961).